The sequence spans 881 residues: Protein HIR1 (881 aa).

WD repeat units follow at residues 17–56, 71–110, 129–168, 171–210, 219–262, 265–318, and 322–363; these read KAKT…DVEA, SHTG…GGRL, GHVA…RLRK, LHQG…LAET, PQST…SDIS, GHEN…PLVV, and IFGA…DLAD. 2 stretches are compositionally biased toward polar residues: residues 398–409 and 459–468; these read FGPSTTTSTHVN and ASPSTAQAST. The tract at residues 398-514 is disordered; the sequence is FGPSTTTSTH…DPTRGVRGRG (117 aa). WD repeat units follow at residues 588 to 635 and 688 to 733; these read FADG…ILNM and FHSF…PIAG.

The protein belongs to the WD repeat HIR1 family.

It localises to the nucleus. Its function is as follows. Required for replication-independent chromatin assembly and for the periodic repression of histone gene transcription during the cell cycle. In Cryptococcus neoformans var. neoformans serotype D (strain B-3501A) (Filobasidiella neoformans), this protein is Protein HIR1 (HIR1).